The primary structure comprises 263 residues: Phosphatidylglycerol--prolipoprotein diacylglyceryl transferase (263 aa).

The next 4 membrane-spanning stretches (helical) occupy residues 6–26, 50–70, 85–105, and 112–132; these read VIFS…VLGI, LLTA…VLIY, TWEG…AVII, and IPTF…LFLG. R133 serves as a coordination point for a 1,2-diacyl-sn-glycero-3-phospho-(1'-sn-glycerol). The next 3 helical transmembrane spans lie at 169–189, 197–217, and 233–253; these read LYEA…LFFL, GALT…VEFF, and MGQL…LGAL.

Belongs to the Lgt family.

Its subcellular location is the cell membrane. It carries out the reaction L-cysteinyl-[prolipoprotein] + a 1,2-diacyl-sn-glycero-3-phospho-(1'-sn-glycerol) = an S-1,2-diacyl-sn-glyceryl-L-cysteinyl-[prolipoprotein] + sn-glycerol 1-phosphate + H(+). It functions in the pathway protein modification; lipoprotein biosynthesis (diacylglyceryl transfer). Functionally, catalyzes the transfer of the diacylglyceryl group from phosphatidylglycerol to the sulfhydryl group of the N-terminal cysteine of a prolipoprotein, the first step in the formation of mature lipoproteins. This Wolbachia pipientis wMel protein is Phosphatidylglycerol--prolipoprotein diacylglyceryl transferase.